Consider the following 145-residue polypeptide: Large ribosomal subunit protein bL9 (145 aa).

It belongs to the bacterial ribosomal protein bL9 family.

Binds to the 23S rRNA. This chain is Large ribosomal subunit protein bL9, found in Ureaplasma parvum serovar 3 (strain ATCC 700970).